A 235-amino-acid polypeptide reads, in one-letter code: Small ribosomal subunit protein uS2 (235 aa).

This sequence belongs to the universal ribosomal protein uS2 family.

The chain is Small ribosomal subunit protein uS2 (rpsB) from Geobacillus stearothermophilus (Bacillus stearothermophilus).